Reading from the N-terminus, the 337-residue chain is Glyceraldehyde-3-phosphate dehydrogenase (337 aa).

NAD(+) is bound by residues 12 to 13 (RI), Asp34, and Lys79. D-glyceraldehyde 3-phosphate-binding positions include 150–152 (SCT), Thr181, 210–211 (TG), and Arg233. Cys151 functions as the Nucleophile in the catalytic mechanism. Asn315 lines the NAD(+) pocket.

Belongs to the glyceraldehyde-3-phosphate dehydrogenase family. Homotetramer.

It is found in the cytoplasm. The enzyme catalyses D-glyceraldehyde 3-phosphate + phosphate + NAD(+) = (2R)-3-phospho-glyceroyl phosphate + NADH + H(+). Its pathway is carbohydrate degradation; glycolysis; pyruvate from D-glyceraldehyde 3-phosphate: step 1/5. The chain is Glyceraldehyde-3-phosphate dehydrogenase (GPD1) from Phaeosphaeria nodorum (strain SN15 / ATCC MYA-4574 / FGSC 10173) (Glume blotch fungus).